The following is a 378-amino-acid chain: uncharacterized protein (378 aa).

This sequence belongs to the IIV-6 329R family.

This is an uncharacterized protein from Acheta domesticus (House cricket).